The following is a 98-amino-acid chain: NADH-ubiquinone oxidoreductase chain 4L (98 aa).

3 helical membrane-spanning segments follow: residues 1 to 21, 29 to 49, and 59 to 79; these read MSLI…GLLM, ALLC…LTAL, and MPII…ALLV.

This sequence belongs to the complex I subunit 4L family. In terms of assembly, core subunit of respiratory chain NADH dehydrogenase (Complex I) which is composed of 45 different subunits.

The protein localises to the mitochondrion inner membrane. The catalysed reaction is a ubiquinone + NADH + 5 H(+)(in) = a ubiquinol + NAD(+) + 4 H(+)(out). In terms of biological role, core subunit of the mitochondrial membrane respiratory chain NADH dehydrogenase (Complex I) which catalyzes electron transfer from NADH through the respiratory chain, using ubiquinone as an electron acceptor. Part of the enzyme membrane arm which is embedded in the lipid bilayer and involved in proton translocation. In Hyperoodon ampullatus (Northern bottlenose whale), this protein is NADH-ubiquinone oxidoreductase chain 4L (MT-ND4L).